Reading from the N-terminus, the 802-residue chain is Putative flavin carrier protein 3 (802 aa).

The first 28 residues, 1–28 (MRFLQVYKSSALIGLIILLASKVNLAEA), serve as a signal peptide directing secretion. The Lumenal segment spans residues 29-169 (KRKLVATSLV…YFSNGKTVSQ (141 aa)). N-linked (GlcNAc...) asparagine glycosylation occurs at Asn-149. The helical transmembrane segment at 170–190 (IGVKWATAVVAGIGLLLSAIL) threads the bilayer. Residues 191–200 (STFGNSTAAS) lie on the Cytoplasmic side of the membrane. A helical transmembrane segment spans residues 201–221 (HISANTMSLFLYFQSVVVVAM). At 222-229 (QHVHRVPP) the chain is on the lumenal side. Residues 230–250 (IAAAWAENLVWSMGLIRISFM) traverse the membrane as a helical segment. At 251 to 255 (QRIFR) the chain is on the cytoplasmic side. The chain crosses the membrane as a helical span at residues 256-278 (WYVQSTGGTPSLYLTSTSMSVLA). The Lumenal portion of the chain corresponds to 279-323 (QRSWQYLMELPLIKRATNVLYGNANTLIFRGIKRLGYKMGIENTS). Asn-321 carries N-linked (GlcNAc...) asparagine glycosylation. A helical membrane pass occupies residues 324–344 (IVCTGFTFFVLCGYVLAGFII). At 345 to 377 (VFKCCVELATRLGWIQKARFWEFRKQWRMILKG) the chain is on the cytoplasmic side. The helical transmembrane segment at 378 to 398 (ALLRYIYIGFVQLTILSFWEF) threads the bilayer. The Lumenal segment spans residues 399–405 (TERDSPA). The helical transmembrane segment at 406-426 (VIVIACLFILLSCGLMLWAAW) threads the bilayer. The Cytoplasmic portion of the chain corresponds to 427-467 (RTVFFARRSVALYNNPAALLYGDEYVLHKYGFFYTMFNANH). The chain crosses the membrane as a helical span at residues 468–488 (YWWNIVLLSYIFVKSLLVGFA). Residues 489–495 (QASGQTQ) lie on the Lumenal side of the membrane. Residues 496 to 516 (VLFMFILDLFYFVAIIYYKPY) form a helical membrane-spanning segment. The Cytoplasmic segment spans residues 517-525 (LDRPTNIMN). The helical transmembrane segment at 526–546 (ILIATVTVVNSFLFMFFSDLF) threads the bilayer. Residue Asn-547 is glycosylated (N-linked (GlcNAc...) asparagine). The Lumenal segment spans residues 547-557 (NQSYKVAAIMG). A helical membrane pass occupies residues 558 to 578 (WIFFIMNAAFSFILLMMILAF). Over 579–802 (AGMMLFSKNP…PPGFFDEGFM (224 aa)) the chain is Cytoplasmic. A phosphoserine mark is found at Ser-616 and Ser-635. Positions 629 to 802 (KDHDDNSDYE…PPGFFDEGFM (174 aa)) are disordered. 3 stretches are compositionally biased toward polar residues: residues 653–663 (DETTPTTVTSS), 697–717 (KQQT…STLG), and 761–788 (DTSS…NNKQ). A phosphoserine mark is found at Ser-779 and Ser-782.

It belongs to the transient receptor potential (TRP) ion channel family.

It localises to the endoplasmic reticulum membrane. May be responsible for the transport of FAD into the endoplasmic reticulum lumen, where it is required for oxidative protein folding. This is Putative flavin carrier protein 3 (FLC3) from Saccharomyces cerevisiae (strain ATCC 204508 / S288c) (Baker's yeast).